A 123-amino-acid chain; its full sequence is Small ribosomal subunit protein uS12 (123 aa).

Positions 1 to 28 (MPTIQQLIRTERSKVQKKTKSPALKQCP) are disordered. Residue Asp-89 is modified to 3-methylthioaspartic acid. The interval 104-123 (ATGVKDRKQGRSKYGTKRPK) is disordered. The span at 113-123 (GRSKYGTKRPK) shows a compositional bias: basic residues.

This sequence belongs to the universal ribosomal protein uS12 family. Part of the 30S ribosomal subunit. Contacts proteins S8 and S17. May interact with IF1 in the 30S initiation complex.

With S4 and S5 plays an important role in translational accuracy. Functionally, interacts with and stabilizes bases of the 16S rRNA that are involved in tRNA selection in the A site and with the mRNA backbone. Located at the interface of the 30S and 50S subunits, it traverses the body of the 30S subunit contacting proteins on the other side and probably holding the rRNA structure together. The combined cluster of proteins S8, S12 and S17 appears to hold together the shoulder and platform of the 30S subunit. The sequence is that of Small ribosomal subunit protein uS12 from Gloeothece citriformis (strain PCC 7424) (Cyanothece sp. (strain PCC 7424)).